Reading from the N-terminus, the 98-residue chain is Citrate lyase acyl carrier protein (98 aa).

S14 is modified (O-(phosphoribosyl dephospho-coenzyme A)serine).

It belongs to the CitD family. Oligomer with a subunit composition of (alpha,beta,gamma)6.

The protein localises to the cytoplasm. In terms of biological role, covalent carrier of the coenzyme of citrate lyase. The chain is Citrate lyase acyl carrier protein from Escherichia coli O81 (strain ED1a).